A 113-amino-acid polypeptide reads, in one-letter code: Large ribosomal subunit protein uL22 (113 aa).

This sequence belongs to the universal ribosomal protein uL22 family. Part of the 50S ribosomal subunit.

This protein binds specifically to 23S rRNA; its binding is stimulated by other ribosomal proteins, e.g. L4, L17, and L20. It is important during the early stages of 50S assembly. It makes multiple contacts with different domains of the 23S rRNA in the assembled 50S subunit and ribosome. In terms of biological role, the globular domain of the protein is located near the polypeptide exit tunnel on the outside of the subunit, while an extended beta-hairpin is found that lines the wall of the exit tunnel in the center of the 70S ribosome. This is Large ribosomal subunit protein uL22 from Natranaerobius thermophilus (strain ATCC BAA-1301 / DSM 18059 / JW/NM-WN-LF).